Here is a 447-residue protein sequence, read N- to C-terminus: Na(+)/H(+) antiporter NhaA 2 (447 aa).

The next 10 membrane-spanning stretches (helical) occupy residues 34 to 54 (VGGV…NSPW), 77 to 97 (LTLG…VVGL), 115 to 135 (ALPI…FVLV), 146 to 166 (GWAI…AVIG), 176 to 196 (FLLT…AVFY), 200 to 220 (INGL…LCVQ), 290 to 310 (VSAG…SIGG), 321 to 341 (PITL…IVLT), 359 to 379 (WVDV…SLLI), and 393 to 413 (FVKI…AVVL).

Belongs to the NhaA Na(+)/H(+) (TC 2.A.33) antiporter family.

The protein resides in the cell membrane. The catalysed reaction is Na(+)(in) + 2 H(+)(out) = Na(+)(out) + 2 H(+)(in). Functionally, na(+)/H(+) antiporter that extrudes sodium in exchange for external protons. This chain is Na(+)/H(+) antiporter NhaA 2, found in Mycolicibacterium gilvum (strain PYR-GCK) (Mycobacterium gilvum (strain PYR-GCK)).